A 176-amino-acid polypeptide reads, in one-letter code: MSLLNVPAGKDLPEDIYVVIEIPANADPIKYEIDKESGALFVDRFMSTAMFYPCNYGYINHTLSLDGDPVDVLVPTPYPLQPGSVIRCRPVGVLKMTDEAGEDAKLIAVPHTKLSKEYDHIKDVNDLPELLKAQIAHFFEHYKDLEKGKWVKVEGWENAEAAKAEIVASFERAKNK.

Substrate is bound by residues K30, R44, and Y56. Mg(2+)-binding residues include D66, D71, and D103. Residue Y142 participates in substrate binding.

Belongs to the PPase family. As to quaternary structure, homohexamer. It depends on Mg(2+) as a cofactor.

It localises to the cytoplasm. It catalyses the reaction diphosphate + H2O = 2 phosphate + H(+). Its function is as follows. Catalyzes the hydrolysis of inorganic pyrophosphate (PPi) forming two phosphate ions. This Escherichia coli O6:H1 (strain CFT073 / ATCC 700928 / UPEC) protein is Inorganic pyrophosphatase.